A 624-amino-acid polypeptide reads, in one-letter code: Alpha-amylase 1 (624 aa).

The signal sequence occupies residues 1 to 28 (MLLINFFIAVLGVISLSPIVVARYILRR). In terms of domain architecture, CBM21 spans 40 to 133 (ESVTGSNHVQ…SDTSVTYTTS (94 aa)). Cysteines 177 and 185 form a disulfide. Tryptophan 230 contributes to the substrate binding site. Asparagine 268 provides a ligand contact to Ca(2+). Residue histidine 269 coordinates substrate. Cysteine 297 and cysteine 311 are disulfide-bonded. Residue asparagine 304 is glycosylated (N-linked (GlcNAc...) asparagine). The Ca(2+) site is built by glutamate 309 and aspartate 322. N-linked (GlcNAc...) asparagine glycosylation is present at asparagine 344. Substrate is bound at residue arginine 351. Aspartate 353, histidine 357, and glutamate 377 together coordinate Ca(2+). Residue aspartate 353 is the Nucleophile of the active site. A substrate-binding site is contributed by 356–357 (KH). The active-site Proton donor is glutamate 377. Glycine 381 serves as a coordination point for substrate. A disulfide bridge links cysteine 387 with cysteine 430. Substrate is bound by residues aspartate 444 and arginine 491. Cysteine 587 and cysteine 622 form a disulfide bridge.

Belongs to the glycosyl hydrolase 13 family. Ca(2+) serves as cofactor.

The protein localises to the secreted. It carries out the reaction Endohydrolysis of (1-&gt;4)-alpha-D-glucosidic linkages in polysaccharides containing three or more (1-&gt;4)-alpha-linked D-glucose units.. In Lipomyces kononenkoae (Yeast), this protein is Alpha-amylase 1 (LKA1).